We begin with the raw amino-acid sequence, 286 residues long: 4-hydroxybenzoate octaprenyltransferase (286 aa).

7 helical membrane passes run 21–40 (GTLLLLWPCLMALVLAAGGM), 96–116 (LFVILGLAAFGLVLLLNGLVV), 142–162 (FLGVVWSWSIPMAYAAQTGEV), 167–187 (WWLFAANWFWTVAYDTMYAMV), 210–230 (QIIGLFQFAALLCFIAAGWSA), 235–255 (LYGLGLLTFVGFSTYQQMLIF), and 266–286 (FLNNNWAGLALFVGLGADYLF).

Belongs to the UbiA prenyltransferase family. Mg(2+) is required as a cofactor.

Its subcellular location is the cell inner membrane. It carries out the reaction all-trans-octaprenyl diphosphate + 4-hydroxybenzoate = 4-hydroxy-3-(all-trans-octaprenyl)benzoate + diphosphate. It functions in the pathway cofactor biosynthesis; ubiquinone biosynthesis. Catalyzes the prenylation of para-hydroxybenzoate (PHB) with an all-trans polyprenyl group. Mediates the second step in the final reaction sequence of ubiquinone-8 (UQ-8) biosynthesis, which is the condensation of the polyisoprenoid side chain with PHB, generating the first membrane-bound Q intermediate 3-octaprenyl-4-hydroxybenzoate. The polypeptide is 4-hydroxybenzoate octaprenyltransferase (Shewanella sp. (strain MR-4)).